The following is a 179-amino-acid chain: UPF0398 protein SSU05_0416 (179 aa).

The protein belongs to the UPF0398 family.

This is UPF0398 protein SSU05_0416 from Streptococcus suis (strain 05ZYH33).